We begin with the raw amino-acid sequence, 377 residues long: UPF0754 membrane protein lmo2224 (377 aa).

2 helical membrane passes run 1-21 and 357-377; these read MSVL…GAMT and YLGG…AMWI.

Belongs to the UPF0754 family.

It localises to the cell membrane. This Listeria monocytogenes serovar 1/2a (strain ATCC BAA-679 / EGD-e) protein is UPF0754 membrane protein lmo2224.